An 814-amino-acid chain; its full sequence is Kexin (814 aa).

The first 19 residues, 1–19, serve as a signal peptide directing secretion; it reads MKVRKYITLCFWWAFSTSA. A propeptide spanning residues 20–109 is cleaved from the precursor; the sequence is LVSSQQIPLK…LFPRNDLFKR (90 aa). N-linked (GlcNAc...) asparagine glycosylation occurs at N42. Positions 110–113 are cleaved as a propeptide — removed by dipeptidylpeptidase STE13; that stretch reads LPVP. Residues 114–678 lie on the Lumenal side of the membrane; the sequence is APPMDSSLLP…KLSSPRQAMH (565 aa). D135 lines the Ca(2+) pocket. The 313-residue stretch at 141 to 453 folds into the Peptidase S8 domain; that stretch reads QWHLVNPSFP…FGKIDAHKLI (313 aa). N-linked (GlcNAc...) asparagine glycosylation occurs at N163. D175 functions as the Charge relay system in the catalytic mechanism. D184 is a Ca(2+) binding site. The Charge relay system role is filled by H213. The Ca(2+) site is built by N227, D277, D320, and E350. Cystine bridges form between C230-C377 and C322-C352. The Charge relay system role is filled by S385. N-linked (GlcNAc...) asparagine glycans are attached at residues N404 and N480. Positions 462–596 constitute a P/Homo B domain; it reads VNAQTWFYLP…RLKLFGESID (135 aa). A disordered region spans residues 651 to 671; the sequence is PQTTTASTDPDSDPNTPKKLS. Over residues 653–667 the composition is skewed to low complexity; the sequence is TTTASTDPDSDPNTP. A helical membrane pass occupies residues 679–699; it reads YFLTIFLIGATFLVLYFMFFM. At 700 to 814 the chain is on the cytoplasmic side; sequence KSRRRIRRSR…PDVPPSSGRS (115 aa). The disordered stretch occupies residues 756–814; it reads SLSSSENGDAEHTIDSVLTNENPFSDPIKQKFPNDANAESASNKLQELQPDVPPSSGRS. A compositionally biased stretch (polar residues) spans 792 to 801; that stretch reads NAESASNKLQ.

This sequence belongs to the peptidase S8 family. Furin subfamily. Ca(2+) is required as a cofactor. Post-translationally, O-glycosylated.

It localises to the golgi apparatus. It is found in the trans-Golgi network membrane. The enzyme catalyses Cleavage of -Lys-Arg-|-Xaa- and -Arg-Arg-|-Xaa- bonds to process yeast alpha-factor pheromone and killer toxin precursors.. Functionally, processing of precursors of alpha-factors and killer toxin. This Saccharomyces cerevisiae (strain ATCC 204508 / S288c) (Baker's yeast) protein is Kexin (KEX2).